The primary structure comprises 289 residues: 4-hydroxy-tetrahydrodipicolinate synthase (289 aa).

Threonine 43 serves as a coordination point for pyruvate. Tyrosine 131 functions as the Proton donor/acceptor in the catalytic mechanism. Catalysis depends on lysine 160, which acts as the Schiff-base intermediate with substrate. Valine 200 lines the pyruvate pocket.

The protein belongs to the DapA family. As to quaternary structure, homotetramer; dimer of dimers.

The protein localises to the cytoplasm. The enzyme catalyses L-aspartate 4-semialdehyde + pyruvate = (2S,4S)-4-hydroxy-2,3,4,5-tetrahydrodipicolinate + H2O + H(+). It participates in amino-acid biosynthesis; L-lysine biosynthesis via DAP pathway; (S)-tetrahydrodipicolinate from L-aspartate: step 3/4. Functionally, catalyzes the condensation of (S)-aspartate-beta-semialdehyde [(S)-ASA] and pyruvate to 4-hydroxy-tetrahydrodipicolinate (HTPA). This chain is 4-hydroxy-tetrahydrodipicolinate synthase, found in Methanococcus maripaludis (strain C5 / ATCC BAA-1333).